Reading from the N-terminus, the 188-residue chain is Elongation factor P-like protein (188 aa).

It belongs to the elongation factor P family.

This is Elongation factor P-like protein from Vibrio campbellii (strain ATCC BAA-1116).